Reading from the N-terminus, the 326-residue chain is Biotin synthase (326 aa).

A Radical SAM core domain is found at 40 to 264 (GQVQACTLVS…VLPRSYVRLA (225 aa)). [4Fe-4S] cluster contacts are provided by Cys-55, Cys-59, and Cys-62. Residues Cys-99, Cys-130, Cys-190, and Arg-262 each coordinate [2Fe-2S] cluster.

This sequence belongs to the radical SAM superfamily. Biotin synthase family. Homodimer. [4Fe-4S] cluster is required as a cofactor. [2Fe-2S] cluster serves as cofactor.

It catalyses the reaction (4R,5S)-dethiobiotin + (sulfur carrier)-SH + 2 reduced [2Fe-2S]-[ferredoxin] + 2 S-adenosyl-L-methionine = (sulfur carrier)-H + biotin + 2 5'-deoxyadenosine + 2 L-methionine + 2 oxidized [2Fe-2S]-[ferredoxin]. It participates in cofactor biosynthesis; biotin biosynthesis; biotin from 7,8-diaminononanoate: step 2/2. Its function is as follows. Catalyzes the conversion of dethiobiotin (DTB) to biotin by the insertion of a sulfur atom into dethiobiotin via a radical-based mechanism. The protein is Biotin synthase of Halorhodospira halophila (strain DSM 244 / SL1) (Ectothiorhodospira halophila (strain DSM 244 / SL1)).